The following is a 238-amino-acid chain: Ribonuclease PH (238 aa).

Residues arginine 86 and 124-126 (GTR) contribute to the phosphate site.

This sequence belongs to the RNase PH family. Homohexameric ring arranged as a trimer of dimers.

It carries out the reaction tRNA(n+1) + phosphate = tRNA(n) + a ribonucleoside 5'-diphosphate. Its function is as follows. Phosphorolytic 3'-5' exoribonuclease that plays an important role in tRNA 3'-end maturation. Removes nucleotide residues following the 3'-CCA terminus of tRNAs; can also add nucleotides to the ends of RNA molecules by using nucleoside diphosphates as substrates, but this may not be physiologically important. Probably plays a role in initiation of 16S rRNA degradation (leading to ribosome degradation) during starvation. The polypeptide is Ribonuclease PH (Solibacter usitatus (strain Ellin6076)).